The chain runs to 136 residues: Large-conductance mechanosensitive channel (136 aa).

Helical transmembrane passes span 15-35 (IDLA…NSIV), 38-58 (IFMP…MFIQ), and 80-100 (GHFI…FFFV).

This sequence belongs to the MscL family. As to quaternary structure, homopentamer.

The protein localises to the cell inner membrane. In terms of biological role, channel that opens in response to stretch forces in the membrane lipid bilayer. May participate in the regulation of osmotic pressure changes within the cell. This chain is Large-conductance mechanosensitive channel, found in Bartonella tribocorum (strain CIP 105476 / IBS 506).